A 119-amino-acid chain; its full sequence is Integration host factor subunit beta (119 aa).

The tract at residues 93–119 (AGGLADTQPDGDAPDQPQPTLLGLHAM) is disordered. The segment covering 97 to 112 (ADTQPDGDAPDQPQPT) has biased composition (low complexity).

It belongs to the bacterial histone-like protein family. In terms of assembly, heterodimer of an alpha and a beta chain.

Its function is as follows. This protein is one of the two subunits of integration host factor, a specific DNA-binding protein that functions in genetic recombination as well as in transcriptional and translational control. The sequence is that of Integration host factor subunit beta from Bordetella petrii (strain ATCC BAA-461 / DSM 12804 / CCUG 43448).